A 300-amino-acid chain; its full sequence is NAD kinase (300 aa).

D75 (proton acceptor) is an active-site residue. Residues 75-76, 149-150, R177, D179, 190-195, A214, and Q248 contribute to the NAD(+) site; these read DG, ND, and TAYALS.

This sequence belongs to the NAD kinase family. It depends on a divalent metal cation as a cofactor.

Its subcellular location is the cytoplasm. It catalyses the reaction NAD(+) + ATP = ADP + NADP(+) + H(+). Functionally, involved in the regulation of the intracellular balance of NAD and NADP, and is a key enzyme in the biosynthesis of NADP. Catalyzes specifically the phosphorylation on 2'-hydroxyl of the adenosine moiety of NAD to yield NADP. The protein is NAD kinase of Paraburkholderia phymatum (strain DSM 17167 / CIP 108236 / LMG 21445 / STM815) (Burkholderia phymatum).